The chain runs to 264 residues: Thymidylate synthase (264 aa).

DUMP is bound at residue Arg21. A (6R)-5,10-methylene-5,6,7,8-tetrahydrofolate-binding site is contributed by His51. Position 126-127 (126-127 (RR)) interacts with dUMP. Residue Cys146 is the Nucleophile of the active site. Residues 166–169 (RSCD), Asn177, and 207–209 (HLY) contribute to the dUMP site. (6R)-5,10-methylene-5,6,7,8-tetrahydrofolate is bound at residue Asp169. Residue Ala263 participates in (6R)-5,10-methylene-5,6,7,8-tetrahydrofolate binding.

The protein belongs to the thymidylate synthase family. Bacterial-type ThyA subfamily. As to quaternary structure, homodimer.

The protein localises to the cytoplasm. The enzyme catalyses dUMP + (6R)-5,10-methylene-5,6,7,8-tetrahydrofolate = 7,8-dihydrofolate + dTMP. The protein operates within pyrimidine metabolism; dTTP biosynthesis. Catalyzes the reductive methylation of 2'-deoxyuridine-5'-monophosphate (dUMP) to 2'-deoxythymidine-5'-monophosphate (dTMP) while utilizing 5,10-methylenetetrahydrofolate (mTHF) as the methyl donor and reductant in the reaction, yielding dihydrofolate (DHF) as a by-product. This enzymatic reaction provides an intracellular de novo source of dTMP, an essential precursor for DNA biosynthesis. The sequence is that of Thymidylate synthase from Shewanella putrefaciens (strain CN-32 / ATCC BAA-453).